A 232-amino-acid polypeptide reads, in one-letter code: DNA repair and recombination protein RadB (232 aa).

Belongs to the eukaryotic RecA-like protein family. RadB subfamily.

Its function is as follows. Involved in DNA repair and in homologous recombination. May regulate the cleavage reactions of the branch-structured DNA. Has a very weak ATPase activity that is not stimulated by DNA. Binds DNA but does not promote DNA strands exchange. The sequence is that of DNA repair and recombination protein RadB from Methanosphaera stadtmanae (strain ATCC 43021 / DSM 3091 / JCM 11832 / MCB-3).